Reading from the N-terminus, the 309-residue chain is Homoserine O-succinyltransferase (309 aa).

The Acyl-thioester intermediate role is filled by Cys142. 2 residues coordinate substrate: Lys163 and Ser192. His235 (proton acceptor) is an active-site residue. Glu237 is a catalytic residue. Substrate is bound at residue Arg249.

Belongs to the MetA family. Homodimer.

It localises to the cytoplasm. The catalysed reaction is L-homoserine + succinyl-CoA = O-succinyl-L-homoserine + CoA. It functions in the pathway amino-acid biosynthesis; L-methionine biosynthesis via de novo pathway; O-succinyl-L-homoserine from L-homoserine: step 1/1. Transfers a succinyl group from succinyl-CoA to L-homoserine, forming succinyl-L-homoserine. This chain is Homoserine O-succinyltransferase, found in Escherichia coli O127:H6 (strain E2348/69 / EPEC).